Reading from the N-terminus, the 312-residue chain is Beta-ketoacyl-[acyl-carrier-protein] synthase III (312 aa).

Active-site residues include Cys-112 and His-237. The tract at residues 238-242 (QANIR) is ACP-binding. Asn-267 is a catalytic residue.

The protein belongs to the thiolase-like superfamily. FabH family. Homodimer.

It localises to the cytoplasm. It carries out the reaction malonyl-[ACP] + acetyl-CoA + H(+) = 3-oxobutanoyl-[ACP] + CO2 + CoA. The protein operates within lipid metabolism; fatty acid biosynthesis. Functionally, catalyzes the condensation reaction of fatty acid synthesis by the addition to an acyl acceptor of two carbons from malonyl-ACP. Catalyzes the first condensation reaction which initiates fatty acid synthesis and may therefore play a role in governing the total rate of fatty acid production. Possesses both acetoacetyl-ACP synthase and acetyl transacylase activities. Its substrate specificity determines the biosynthesis of branched-chain and/or straight-chain of fatty acids. The polypeptide is Beta-ketoacyl-[acyl-carrier-protein] synthase III (Listeria innocua serovar 6a (strain ATCC BAA-680 / CLIP 11262)).